Reading from the N-terminus, the 394-residue chain is Methane monooxygenase component A beta chain (394 aa).

In terms of assembly, m.trichosporium has two forms of methane monooxygenase, a soluble and a membrane-bound type. The soluble type consists of four components (A to D): protein A, comprising three chains, in an alpha-2, beta-2, gamma-2 configuration, is a nonheme iron protein containing an unusual mu-hydroxo bridge structure at its active site and interacts with both oxygen and methane.

It catalyses the reaction methane + NADH + O2 + H(+) = methanol + NAD(+) + H2O. The enzyme catalyses methane + NADPH + O2 + H(+) = methanol + NADP(+) + H2O. Responsible for the initial oxygenation of methane to methanol in methanotrophs. It also catalyzes the monohydroxylation of a variety of unactivated alkenes, alicyclic, aromatic and heterocyclic compounds. The protein is Methane monooxygenase component A beta chain (mmoY) of Methylosinus trichosporium.